The primary structure comprises 274 residues: Elongation factor Ts (274 aa).

The interval 79-82 (TDFV) is involved in Mg(2+) ion dislocation from EF-Tu.

Belongs to the EF-Ts family.

It is found in the cytoplasm. Its function is as follows. Associates with the EF-Tu.GDP complex and induces the exchange of GDP to GTP. It remains bound to the aminoacyl-tRNA.EF-Tu.GTP complex up to the GTP hydrolysis stage on the ribosome. This Azobacteroides pseudotrichonymphae genomovar. CFP2 protein is Elongation factor Ts.